Reading from the N-terminus, the 342-residue chain is MQIEDFDFHLPEELIAQTPLKDRTSSRLCVLDKQTSEITHRSFKDITTYLQAGDCLVLNDTKVLPARLYGVKSDTGAKIEVLLLHQQEEDTWEVLVKPAKKVKVGTEIIFGNGKLKATCIDLKDHGGRIMTFSYTGIFYEILDQLGEMPLPPYIKEQLPEQDRYQTVYAKEKGSAAAPTAGLHFTDKLLEDIKAMGVNIVFVTLHVGLGTFRPVSVDSVEDHDMHSEFYSMSESAAKTLNEAKAAGRRIISVGTTSTRTLETIVRDHDGKFVATRGWTDIFIYPPYKFRAIDGLITNFHLPKSTLIMMISALAGKEAILHAYNEAVKEEYRFFSFGDAMLIL.

The protein belongs to the QueA family. In terms of assembly, monomer.

The protein localises to the cytoplasm. The enzyme catalyses 7-aminomethyl-7-carbaguanosine(34) in tRNA + S-adenosyl-L-methionine = epoxyqueuosine(34) in tRNA + adenine + L-methionine + 2 H(+). It participates in tRNA modification; tRNA-queuosine biosynthesis. Transfers and isomerizes the ribose moiety from AdoMet to the 7-aminomethyl group of 7-deazaguanine (preQ1-tRNA) to give epoxyqueuosine (oQ-tRNA). The protein is S-adenosylmethionine:tRNA ribosyltransferase-isomerase of Oceanobacillus iheyensis (strain DSM 14371 / CIP 107618 / JCM 11309 / KCTC 3954 / HTE831).